We begin with the raw amino-acid sequence, 826 residues long: Beta-galactosidase 7 (826 aa).

Positions 1-25 are cleaved as a signal peptide; the sequence is MKMKHFTRLLSLFFILITSLSLAKS. N-linked (GlcNAc...) asparagine glycosylation is present at asparagine 154. Glutamate 184 functions as the Proton donor in the catalytic mechanism. The active-site Nucleophile is glutamate 253. Asparagine 254, asparagine 351, asparagine 380, asparagine 491, asparagine 665, asparagine 706, asparagine 797, and asparagine 801 each carry an N-linked (GlcNAc...) asparagine glycan. One can recognise an SUEL-type lectin domain in the interval 740-826; sequence AHEHNKVELS…PKKLAVELEC (87 aa).

The protein belongs to the glycosyl hydrolase 35 family. Expressed in flowers.

The protein resides in the secreted. The protein localises to the extracellular space. It localises to the apoplast. It carries out the reaction Hydrolysis of terminal non-reducing beta-D-galactose residues in beta-D-galactosides.. This chain is Beta-galactosidase 7 (BGAL7), found in Arabidopsis thaliana (Mouse-ear cress).